The sequence spans 121 residues: ATP synthase epsilon chain (121 aa).

The protein belongs to the ATPase epsilon chain family. As to quaternary structure, F-type ATPases have 2 components, CF(1) - the catalytic core - and CF(0) - the membrane proton channel. CF(1) has five subunits: alpha(3), beta(3), gamma(1), delta(1), epsilon(1). CF(0) has three main subunits: a, b and c.

The protein localises to the cell membrane. Functionally, produces ATP from ADP in the presence of a proton gradient across the membrane. The sequence is that of ATP synthase epsilon chain from Mycolicibacterium smegmatis (strain ATCC 700084 / mc(2)155) (Mycobacterium smegmatis).